A 132-amino-acid chain; its full sequence is Large ribosomal subunit protein uL14 (132 aa).

Belongs to the universal ribosomal protein uL14 family. Part of the 50S ribosomal subunit. Forms a cluster with proteins L3 and L24e, part of which may contact the 16S rRNA in 2 intersubunit bridges.

Its function is as follows. Binds to 23S rRNA. Forms part of two intersubunit bridges in the 70S ribosome. The sequence is that of Large ribosomal subunit protein uL14 from Methanosarcina mazei (strain ATCC BAA-159 / DSM 3647 / Goe1 / Go1 / JCM 11833 / OCM 88) (Methanosarcina frisia).